A 951-amino-acid chain; its full sequence is Valine--tRNA ligase (951 aa).

The short motif at 42-52 (PNVTGSLHMGH) is the 'HIGH' region element. The short motif at 554–558 (KMSKS) is the 'KMSKS' region element. Position 557 (Lys557) interacts with ATP. The stretch at 882 to 951 (LIDKDAELAR…EEQKATIAAL (70 aa)) forms a coiled coil.

It belongs to the class-I aminoacyl-tRNA synthetase family. ValS type 1 subfamily. As to quaternary structure, monomer.

The protein localises to the cytoplasm. The catalysed reaction is tRNA(Val) + L-valine + ATP = L-valyl-tRNA(Val) + AMP + diphosphate. Catalyzes the attachment of valine to tRNA(Val). As ValRS can inadvertently accommodate and process structurally similar amino acids such as threonine, to avoid such errors, it has a 'posttransfer' editing activity that hydrolyzes mischarged Thr-tRNA(Val) in a tRNA-dependent manner. The chain is Valine--tRNA ligase from Vibrio vulnificus (strain CMCP6).